The chain runs to 362 residues: Malate dehydrogenase (362 aa).

Belongs to the LDH2/MDH2 oxidoreductase family. As to quaternary structure, homodimer.

The protein localises to the cytoplasm. The catalysed reaction is (S)-malate + NAD(+) = oxaloacetate + NADH + H(+). The polypeptide is Malate dehydrogenase (mdh) (Pyrococcus abyssi (strain GE5 / Orsay)).